The primary structure comprises 157 residues: 6,7-dimethyl-8-ribityllumazine synthase (157 aa).

5-amino-6-(D-ribitylamino)uracil contacts are provided by residues Phe22, 56-58 (AFE), and 81-83 (VLI). 86 to 87 (ET) contributes to the (2S)-2-hydroxy-3-oxobutyl phosphate binding site. Residue His89 is the Proton donor of the active site. Phe114 is a binding site for 5-amino-6-(D-ribitylamino)uracil. A (2S)-2-hydroxy-3-oxobutyl phosphate-binding site is contributed by Arg128.

It belongs to the DMRL synthase family.

The enzyme catalyses (2S)-2-hydroxy-3-oxobutyl phosphate + 5-amino-6-(D-ribitylamino)uracil = 6,7-dimethyl-8-(1-D-ribityl)lumazine + phosphate + 2 H2O + H(+). The protein operates within cofactor biosynthesis; riboflavin biosynthesis; riboflavin from 2-hydroxy-3-oxobutyl phosphate and 5-amino-6-(D-ribitylamino)uracil: step 1/2. Catalyzes the formation of 6,7-dimethyl-8-ribityllumazine by condensation of 5-amino-6-(D-ribitylamino)uracil with 3,4-dihydroxy-2-butanone 4-phosphate. This is the penultimate step in the biosynthesis of riboflavin. The sequence is that of 6,7-dimethyl-8-ribityllumazine synthase from Chlamydia trachomatis serovar L2 (strain ATCC VR-902B / DSM 19102 / 434/Bu).